The sequence spans 370 residues: S-adenosylmethionine decarboxylase proenzyme (370 aa).

Position 28 (Phe28) interacts with substrate. Active-site residues include Glu29 and Glu32. Glu85 provides a ligand contact to substrate. Ser86 serves as the catalytic Schiff-base intermediate with substrate; via pyruvic acid. Pyruvic acid (Ser); by autocatalysis is present on Ser86. Cys100 functions as the Proton donor; for catalytic activity in the catalytic mechanism. Active-site proton acceptor; for processing activity residues include Ser249 and His262. Glu266 is a binding site for substrate.

It belongs to the eukaryotic AdoMetDC family. As to quaternary structure, forms a heterodimer with catalytically inactive AdoMetDC prozyme; heterodimerization is required to activate AdoMetDC. The cofactor is pyruvate. In terms of processing, is synthesized initially as an inactive proenzyme. Formation of the active enzyme involves a self-maturation process in which the active site pyruvoyl group is generated from an internal serine residue via an autocatalytic post-translational modification. Two non-identical subunits are generated from the proenzyme in this reaction, and the pyruvate is formed at the N-terminus of the alpha chain, which is derived from the carboxyl end of the proenzyme. The post-translation cleavage follows an unusual pathway, termed non-hydrolytic serinolysis, in which the side chain hydroxyl group of the serine supplies its oxygen atom to form the C-terminus of the beta chain, while the remainder of the serine residue undergoes an oxidative deamination to produce ammonia and the pyruvoyl group blocking the N-terminus of the alpha chain.

It catalyses the reaction S-adenosyl-L-methionine + H(+) = S-adenosyl 3-(methylsulfanyl)propylamine + CO2. The protein operates within amine and polyamine biosynthesis; S-adenosylmethioninamine biosynthesis; S-adenosylmethioninamine from S-adenosyl-L-methionine: step 1/1. Allosterically activated by AdoMetDC prozyme. Activated by putrescine and to a lesser extent by spermidine, norspermidine and spermine. Inhibited by 5'-([(Z)-4-amino-2-butenyl]methylamino)-5'-deoxyadenosine (MDL 73811). In terms of biological role, in association with the catalytically inactive AdoMetDC prozyme, catalyzes the decarboxylation of S-adenosyl-L-methionine which is essential for the biosynthesis of the polyamine spermidine. Required for growth and survival during the bloodstream life cycle stage. This chain is S-adenosylmethionine decarboxylase proenzyme, found in Trypanosoma brucei brucei.